A 245-amino-acid polypeptide reads, in one-letter code: MEKAKSQSLEEDFEGQASHTGPKGVINDWRKFKLESEDSDSVAHSKKEILRQMSSPQSRDDKDSKERFSRKMSVQEYELIHKDKEDENCLRKYRRQCMQDMHQKLSFGPRYGFVYELESGEQFLETIEKEQKITTIVVHIYEDGIKGCDALNSSLICLAAEYPMVKFCKIKASNTGAGDRFSSDVLPTLLVYKGGELLSNFISVTEQLAEEFFTGDVESFLNEYGLLPEKEMHVLEQTNMEEDME.

Residues 1 to 70 are disordered; that stretch reads MEKAKSQSLE…DKDSKERFSR (70 aa). The 244-residue stretch at 1–244 folds into the Phosducin domain; the sequence is MEKAKSQSLE…LEQTNMEEDM (244 aa). Composition is skewed to basic and acidic residues over residues 28–50 and 58–69; these read DWRKFKLESEDSDSVAHSKKEIL and SRDDKDSKERFS. Position 73 is a phosphoserine; by PKA (serine 73). The segment at 111–245 is thioredoxin fold; that stretch reads YGFVYELESG…EQTNMEEDME (135 aa).

The protein belongs to the phosducin family. Interacts with CRX. Forms a complex with the beta and gamma subunits of the GTP-binding protein, transducin. Light-induced changes in cyclic nucleotide levels modulate the phosphorylation of this protein by cAMP kinase.

The protein localises to the cytoplasm. Its subcellular location is the cytosol. It localises to the nucleus. The protein resides in the cell projection. It is found in the cilium. The protein localises to the photoreceptor outer segment. Its subcellular location is the photoreceptor inner segment. Its function is as follows. Inhibits the transcriptional activation activity of the cone-rod homeobox CRX. May participate in the regulation of visual phototransduction or in the integration of photoreceptor metabolism. This Bos taurus (Bovine) protein is Phosducin (PDC).